A 510-amino-acid polypeptide reads, in one-letter code: Cytochrome P450 monooxygenase BOT1 (510 aa).

Residues P16–V36 form a helical membrane-spanning segment. C454 is a binding site for heme. Residue N476 is glycosylated (N-linked (GlcNAc...) asparagine).

This sequence belongs to the cytochrome P450 family. It depends on heme as a cofactor.

It is found in the membrane. It functions in the pathway secondary metabolite biosynthesis. Its function is as follows. Cytochrome P450 monooxygenase; part of the gene cluster that mediates the biosynthesis of botrydial. Botrydial is necessary for colonization of plant tissue by the T4 strain. It is a strain-dependent virulence factor since highly aggressive strains like SAS56 or B05 still retain substantial virulence when botrydial synthesis is impaired, since they produce also botcinic acid. The first step of botrydial biosynthesis is performed by the sesquiterpene synthase BOT2 which catalyzes the cyclization of farnesyl diphosphate (FPP) to presilphiperfolan-8-beta-ol (PSP). The cytochrome P450 monooxygenase BOT4 then catalyzes the hydroxylation at C-4 to give a probotryane intermediate. Acetylation of the hydroxyl at C-4 is carried out by the acetyltransferase BOT5, followed by the combined action of the P450 monooxygenases BOT3 and BOT1, to yield finally the glycol, via the regio- and stereospecific hydroxylations at C-10 and C-15 of the probotryane intermediates, respectively. The cleavage of the C10-C15 bond of probotryane skeleton is an intriguing and chemically important reaction, which could be mediated by some of the monooxygenases or by a combination of them. It is possible that either BOT3 or BOT1 would oxidize either the 10- or the 15-hydroxy group to the hydroperoxide derivative, which would then undergo heterolytic fragmentation to give the dialdehyde botrydial. Finally, the dehydrogenase BOT7 might be involved in the conversion of botrydial to dihydrobotrydial. This Botryotinia fuckeliana (Noble rot fungus) protein is Cytochrome P450 monooxygenase BOT1.